The sequence spans 513 residues: Quiannulatic acid synthase (513 aa).

The helical transmembrane segment at 14 to 34 threads the bilayer; the sequence is VFTFCNIILALASLVVAQCVY. A glycan (N-linked (GlcNAc...) asparagine) is linked at asparagine 308. Cysteine 477 serves as a coordination point for heme.

It belongs to the cytochrome P450 family. Requires heme as cofactor.

The protein resides in the membrane. The enzyme catalyses quiannulatene + 3 reduced [NADPH--hemoprotein reductase] + 3 O2 = quiannulatate + 3 oxidized [NADPH--hemoprotein reductase] + 4 H2O + 4 H(+). It functions in the pathway secondary metabolite biosynthesis; terpenoid biosynthesis. Cytochrome P450 monooxygenase; part of the gene cluster that mediates the biosynthesis of the pentacyclic sesterterpene quiannulatic acid. The first step of the pathway is performed by the sesterterpene synthase (QS) that possesses both prenyl transferase and terpene cyclase activity, converting isopentenyl diphosphate and dimethylallyl diphosphate into geranylfarnesyl diphosphate (GFPP) and further converting GFPP into quiannulatene via an unprecedented cyclization mode which involves three rounds of hydride shifts and two successive C-C bond migrations to construct the 5-6-5-5-5 fused ring. The cytochrome P450 monooxygenase Qnn-P450 then oxidizes quiannulatene at C-19 in 3 successive reactions to afford quiannulatic acid. The polypeptide is Quiannulatic acid synthase (Emericella variicolor (Aspergillus stellatus)).